Consider the following 507-residue polypeptide: Maturase K (507 aa).

This sequence belongs to the intron maturase 2 family. MatK subfamily.

It is found in the plastid. The protein resides in the chloroplast. Functionally, usually encoded in the trnK tRNA gene intron. Probably assists in splicing its own and other chloroplast group II introns. This Lyonia ferruginea (Rusty staggerbush) protein is Maturase K.